We begin with the raw amino-acid sequence, 91 residues long: Salivary lectin pathway inhibitor (91 aa).

The signal sequence occupies residues 1–21 (MGLTETTLVLVSLAFFASAVA). Residues Asn-26 and Asn-87 are each glycosylated (N-linked (GlcNAc...) asparagine).

The protein belongs to the salp14 family. Glycosylated; deglycosylation largely abrogates the complement inhibitory effect. In terms of tissue distribution, nymph salivary gland (at protein level). Saliva (at protein level). Not detected in midgut.

Its subcellular location is the secreted. Inhibits the lectin pathway of complement system activation in the host by reducing binding of mannose-binding lectin and L-ficolin to their ligands. Does not affect the classical and alternative pathways of complement system activation in the host. Functionally, (Microbial infection) Protects Borrelia garinii (strain A87S) from host complement-mediated killing by preventing deposition of host C5b-9 membrane attack complexes on the surface of spirochetes. Inhibits phagocytosis of B.garinii (strain A87S) by human neutrophils. Impairs Borrelia-induced complement-mediated chemotaxis of human polymorphonuclear leukocytes. In terms of biological role, (Microbial infection) Protects Borrelia burgdorferi (strain N40), which is resistant to normal human serum, from Borrelia-opsonizing antibody-mediated complement-dependent killing. The protein is Salivary lectin pathway inhibitor of Ixodes scapularis (Black-legged tick).